A 456-amino-acid chain; its full sequence is Transforming growth factor beta-1-induced transcript 1 protein (456 aa).

An N-acetylmethionine modification is found at Met-1. The tract at residues 1–79 (MEDLDALLSD…ATPPFSSSCG (79 aa)) is disordered. Residues 1 to 195 (MEDLDALLSD…DTPSPPGPTS (195 aa)) form a transcription activation region. An interaction with PTK2B/PYK2 region spans residues 1–235 (MEDLDALLSD…CNKPIAGQVV (235 aa)). Residues 3-15 (DLDALLSDLETTT) carry the LD motif 1 motif. Thr-33 is subject to Phosphothreonine. Tyr-55 bears the Phosphotyrosine mark. Ser-63 is subject to Phosphoserine. The segment at 78–131 (CGVLGTGLCELDRLLQELNATQFNITDEIMSQFPSSKETAGEQKEDQSEDKKRP) is interaction with PTK2/FAK1. The LD motif 2 motif lies at 87–99 (ELDRLLQELNATQ). Residues 109 to 146 (QFPSSKETAGEQKEDQSEDKKRPSPPPSPSPVLPKPSA) form a disordered region. Basic and acidic residues predominate over residues 116–130 (TAGEQKEDQSEDKKR). Ser-132, Ser-136, Ser-138, Ser-159, Ser-181, and Ser-189 each carry phosphoserine. Residues 132-142 (SPPPSPSPVLP) show a composition bias toward pro residues. The LD motif 3 signature appears at 152 to 163 (ELDRLMASLSDF). The segment at 166–200 (QNHLPASGPTPPPVPSSMSEDTPSPPGPTSKGSLD) is disordered. The LD motif 4 signature appears at 198–210 (SLDTMLGLLQSDL). 4 LIM zinc-binding domains span residues 221-280 (GLCG…RFSP), 281-338 (RCGL…QLFA), 339-398 (PRCQ…RRGS), and 399-456 (LCAT…KLFG). At Ser-398 the chain carries Phosphoserine. Residue Thr-402 is modified to Phosphothreonine.

It belongs to the paxillin family. As to quaternary structure, homooligomer. Interacts with CRIP2, HSPB1, ILK, LIMS1, LIMS2, NCK2, NUDT16L1, PAK, PPARG, PTPN12, TCF3, TCF7L2 and VCL. Forms a complex with GIT1 and ARHGEF7. Interacts with AR/androgen receptor in a ligand-dependent manner. Interacts with CSK, LYN, MAPK15, NR3C1, PPARG, PTK2/FAK1, PTK2B/PYK2, SLC6A3, SLC6A4, SMAD3, SRC and talin. Interacts (via LIM zinc-binding domain 2) with CBLC (via RING-type zinc finger); the interaction is direct and enhances CBLC E3 ubiquitin-protein ligase activity. Phosphorylated by gonadotropin-releasing hormone-activated SRC.

Its subcellular location is the cell junction. It is found in the focal adhesion. The protein localises to the nucleus matrix. It localises to the cytoplasm. The protein resides in the cytoskeleton. Functionally, functions as a molecular adapter coordinating multiple protein-protein interactions at the focal adhesion complex and in the nucleus. Links various intracellular signaling modules to plasma membrane receptors and regulates the Wnt and TGFB signaling pathways. May also regulate SLC6A3 and SLC6A4 targeting to the plasma membrane hence regulating their activity. In the nucleus, functions as a nuclear receptor coactivator regulating glucocorticoid, androgen, mineralocorticoid and progesterone receptor transcriptional activity. May play a role in the processes of cell growth, proliferation, migration, differentiation and senescence. May have a zinc-dependent DNA-binding activity. This Bos taurus (Bovine) protein is Transforming growth factor beta-1-induced transcript 1 protein (TGFB1I1).